Reading from the N-terminus, the 327-residue chain is 2-methoxy-6-polyprenyl-1,4-benzoquinol methylase, mitochondrial (327 aa).

Residues 1–49 (MAAPRCCVLWRVCGRGWWRATGHCRLPGCHRSWPWATLGTRSLSQEKRA) constitute a mitochondrion transit peptide. S-adenosyl-L-methionine contacts are provided by residues Thr117, Asp171, and 199-200 (DA).

It belongs to the class I-like SAM-binding methyltransferase superfamily. MenG/UbiE family. As to quaternary structure, component of a multi-subunit COQ enzyme complex, composed of at least COQ3, COQ4, COQ5, COQ6, COQ7 and COQ9. Interacts with PYURF; the interaction is direct, stabilizes COQ5 protein and associates PYURF with COQ enzyme complex.

It is found in the mitochondrion inner membrane. It carries out the reaction 2-methoxy-6-(all-trans-decaprenyl)benzene-1,4-diol + S-adenosyl-L-methionine = 5-methoxy-2-methyl-3-(all-trans-decaprenyl)benzene-1,4-diol + S-adenosyl-L-homocysteine + H(+). Its pathway is cofactor biosynthesis; ubiquinone biosynthesis. Methyltransferase required for the conversion of 2-decaprenyl-6-methoxy-1,4-benzoquinol (DDMQH2) to 2-decaprenyl-3-methyl-6-methoxy-1,4-benzoquinol (DMQH2). The chain is 2-methoxy-6-polyprenyl-1,4-benzoquinol methylase, mitochondrial from Mus musculus (Mouse).